Here is a 475-residue protein sequence, read N- to C-terminus: Threonine synthase (475 aa).

Position 120 is an N6-(pyridoxal phosphate)lysine (Lys-120).

The protein belongs to the threonine synthase family. Pyridoxal 5'-phosphate serves as cofactor.

It catalyses the reaction O-phospho-L-homoserine + H2O = L-threonine + phosphate. It functions in the pathway amino-acid biosynthesis; L-threonine biosynthesis; L-threonine from L-aspartate: step 5/5. In terms of biological role, catalyzes the gamma-elimination of phosphate from L-phosphohomoserine and the beta-addition of water to produce L-threonine. The polypeptide is Threonine synthase (thrC) (Methylobacillus glycogenes).